A 603-amino-acid polypeptide reads, in one-letter code: Protein SHORT-ROOT 2 (603 aa).

Disordered stretches follow at residues H11–S58 and D106–G140. Residues S31–S44 are compositionally biased toward low complexity. Basic residues predominate over residues H45–S58. Residues S108–S125 are compositionally biased toward low complexity. The GRAS domain maps to A179–K602. The interval R186 to R249 is leucine repeat I (LRI). Residues A268–V354 form a VHIID region. The VHIID signature appears at L318–D322. A leucine repeat II (LRII) region spans residues E370–D406. The PFYRE stretch occupies residues L416–D514. An SAW region spans residues S517–K602.

This sequence belongs to the GRAS family. As to quaternary structure, does not interact with SCR1.

It localises to the nucleus. Its function is as follows. Putative transcription factor involved in asymmetric cell division. This chain is Protein SHORT-ROOT 2 (SHR2), found in Oryza sativa subsp. japonica (Rice).